Reading from the N-terminus, the 436-residue chain is UPF0597 protein YhaM (436 aa).

It belongs to the UPF0597 family.

The polypeptide is UPF0597 protein YhaM (Escherichia coli O7:K1 (strain IAI39 / ExPEC)).